Here is a 122-residue protein sequence, read N- to C-terminus: Holo-[acyl-carrier-protein] synthase (122 aa).

Residues aspartate 8 and glutamate 56 each coordinate Mg(2+).

This sequence belongs to the P-Pant transferase superfamily. AcpS family. It depends on Mg(2+) as a cofactor.

It is found in the cytoplasm. The catalysed reaction is apo-[ACP] + CoA = holo-[ACP] + adenosine 3',5'-bisphosphate + H(+). In terms of biological role, transfers the 4'-phosphopantetheine moiety from coenzyme A to a Ser of acyl-carrier-protein. This Streptomyces griseus subsp. griseus (strain JCM 4626 / CBS 651.72 / NBRC 13350 / KCC S-0626 / ISP 5235) protein is Holo-[acyl-carrier-protein] synthase.